Here is a 358-residue protein sequence, read N- to C-terminus: Neuronal-specific septin-3 (358 aa).

Positions 1-10 are enriched in basic and acidic residues; that stretch reads MSKGLPEART. The disordered stretch occupies residues 1–29; that stretch reads MSKGLPEARTDTAMSELVPEPRPKPAVPM. Residues 58–331 enclose the Septin-type G domain; sequence TGFDFNIMVV…ETYRAKRLND (274 aa). The interval 68-75 is G1 motif; the sequence is GQSGLGKS. 68–75 serves as a coordination point for GTP; sequence GQSGLGKS. Phosphoserine is present on S91. T102 lines the GTP pocket. Residues 125–128 are G3 motif; the sequence is DTPG. The segment at 207 to 210 is G4 motif; it reads AKAD. GTP-binding positions include 208–216, G265, and R280; that span reads KADTMTLEE.

This sequence belongs to the TRAFAC class TrmE-Era-EngA-EngB-Septin-like GTPase superfamily. Septin GTPase family. Septins polymerize into heterooligomeric protein complexes that form filaments, and can associate with cellular membranes, actin filaments and microtubules. GTPase activity is required for filament formation. Phosphorylated by PKG on serine residues. Phosphorylated by PKG on Ser-91. As to expression, brain-specific, with highest expression in the hippocampal CA3 region (at protein level).

It localises to the cytoplasm. The protein localises to the cytoskeleton. Its subcellular location is the synapse. Functionally, filament-forming cytoskeletal GTPase. May play a role in cytokinesis (Potential). The polypeptide is Neuronal-specific septin-3 (Rattus norvegicus (Rat)).